Consider the following 398-residue polypeptide: Acetate kinase (398 aa).

N10 serves as a coordination point for Mg(2+). K17 is a binding site for ATP. A substrate-binding site is contributed by R91. The Proton donor/acceptor role is filled by D148. Residues 208 to 212, 283 to 285, and 331 to 335 each bind ATP; these read HLGNG, DCR, and GIGEN. E385 lines the Mg(2+) pocket.

This sequence belongs to the acetokinase family. In terms of assembly, homodimer. Mg(2+) is required as a cofactor. It depends on Mn(2+) as a cofactor.

It is found in the cytoplasm. The enzyme catalyses acetate + ATP = acetyl phosphate + ADP. The protein operates within metabolic intermediate biosynthesis; acetyl-CoA biosynthesis; acetyl-CoA from acetate: step 1/2. Its function is as follows. Catalyzes the formation of acetyl phosphate from acetate and ATP. Can also catalyze the reverse reaction. The chain is Acetate kinase from Shewanella loihica (strain ATCC BAA-1088 / PV-4).